A 357-amino-acid polypeptide reads, in one-letter code: UDP-N-acetylglucosamine--N-acetylmuramyl-(pentapeptide) pyrophosphoryl-undecaprenol N-acetylglucosamine transferase (357 aa).

UDP-N-acetyl-alpha-D-glucosamine contacts are provided by residues 12–14 (TGG), Asn124, Arg162, Ser190, Ile243, 262–267 (ALTVAE), and Gln288.

This sequence belongs to the glycosyltransferase 28 family. MurG subfamily.

The protein localises to the cell inner membrane. It carries out the reaction di-trans,octa-cis-undecaprenyl diphospho-N-acetyl-alpha-D-muramoyl-L-alanyl-D-glutamyl-meso-2,6-diaminopimeloyl-D-alanyl-D-alanine + UDP-N-acetyl-alpha-D-glucosamine = di-trans,octa-cis-undecaprenyl diphospho-[N-acetyl-alpha-D-glucosaminyl-(1-&gt;4)]-N-acetyl-alpha-D-muramoyl-L-alanyl-D-glutamyl-meso-2,6-diaminopimeloyl-D-alanyl-D-alanine + UDP + H(+). It participates in cell wall biogenesis; peptidoglycan biosynthesis. Its function is as follows. Cell wall formation. Catalyzes the transfer of a GlcNAc subunit on undecaprenyl-pyrophosphoryl-MurNAc-pentapeptide (lipid intermediate I) to form undecaprenyl-pyrophosphoryl-MurNAc-(pentapeptide)GlcNAc (lipid intermediate II). In Alcanivorax borkumensis (strain ATCC 700651 / DSM 11573 / NCIMB 13689 / SK2), this protein is UDP-N-acetylglucosamine--N-acetylmuramyl-(pentapeptide) pyrophosphoryl-undecaprenol N-acetylglucosamine transferase.